The following is a 165-amino-acid chain: Crossover junction endodeoxyribonuclease RuvC (165 aa).

Residues Asp8, Glu66, and Asp138 contribute to the active site. Mg(2+) contacts are provided by Asp8, Glu66, and Asp138.

It belongs to the RuvC family. In terms of assembly, homodimer which binds Holliday junction (HJ) DNA. The HJ becomes 2-fold symmetrical on binding to RuvC with unstacked arms; it has a different conformation from HJ DNA in complex with RuvA. In the full resolvosome a probable DNA-RuvA(4)-RuvB(12)-RuvC(2) complex forms which resolves the HJ. Requires Mg(2+) as cofactor.

It is found in the cytoplasm. It carries out the reaction Endonucleolytic cleavage at a junction such as a reciprocal single-stranded crossover between two homologous DNA duplexes (Holliday junction).. Functionally, the RuvA-RuvB-RuvC complex processes Holliday junction (HJ) DNA during genetic recombination and DNA repair. Endonuclease that resolves HJ intermediates. Cleaves cruciform DNA by making single-stranded nicks across the HJ at symmetrical positions within the homologous arms, yielding a 5'-phosphate and a 3'-hydroxyl group; requires a central core of homology in the junction. The consensus cleavage sequence is 5'-(A/T)TT(C/G)-3'. Cleavage occurs on the 3'-side of the TT dinucleotide at the point of strand exchange. HJ branch migration catalyzed by RuvA-RuvB allows RuvC to scan DNA until it finds its consensus sequence, where it cleaves and resolves the cruciform DNA. The sequence is that of Crossover junction endodeoxyribonuclease RuvC from Methylococcus capsulatus (strain ATCC 33009 / NCIMB 11132 / Bath).